The chain runs to 471 residues: U1 small nuclear ribonucleoprotein 70 kDa (471 aa).

The segment at 48 to 78 (FEDPRDAPPPTRAETREERMERKRREKIERR) is disordered. Basic and acidic residues predominate over residues 60-78 (AETREERMERKRREKIERR). The required for interaction with U1 RNA stretch occupies residues 92–202 (HNDQNAQGDA…GGGLGGTRRG (111 aa)). The RRM domain occupies 103-184 (KTLFVARVNY…LVDVERGRTV (82 aa)). Residues 187–471 (WRPRRLGGGL…NGYMMEPPME (285 aa)) form a disordered region. Over residues 192 to 201 (LGGGLGGTRR) the composition is skewed to gly residues. A compositionally biased stretch (basic and acidic residues) spans 207-245 (NIRHSGRDDTSRYDERDRDRERERDRRERSRERDKERER). Positions 246-259 (RRSRSRERRRRSRS) are enriched in basic residues. Residues 260 to 293 (REKEERKRSRERSRDKDKDKDKDKDKEKDKDKDR) are compositionally biased toward basic and acidic residues. Positions 294–303 (DRKRRSRSRE) are enriched in basic residues. Composition is skewed to basic and acidic residues over residues 304–321 (RKRERDRDREKKEDRVEG) and 344–428 (IELK…ERVP).

Component of the U1 snRNP. The U1 snRNP is composed of the U1 snRNA and the 7 core Sm proteins snrpb, snrpd1, snrpd2, snrpd3, snrpe, snrpf and snrpg that assemble in a heptameric protein ring on the Sm site of the small nuclear RNA to form the core snRNP, and at least three U1 snRNP-specific proteins snrnp70/U1-70K, snrpa/U1-A and snrpc/U1-C.

It is found in the nucleus speckle. Its subcellular location is the nucleus. The protein localises to the nucleoplasm. Functionally, component of the spliceosomal U1 snRNP, which is essential for recognition of the pre-mRNA 5' splice-site and the subsequent assembly of the spliceosome. snrnp70 binds to the loop I region of U1-snRNA. The chain is U1 small nuclear ribonucleoprotein 70 kDa (snrnp70) from Xenopus tropicalis (Western clawed frog).